Reading from the N-terminus, the 172-residue chain is FMN reductase (NADH) RutF 2 (172 aa).

The protein belongs to the non-flavoprotein flavin reductase family. RutF subfamily.

It catalyses the reaction FMNH2 + NAD(+) = FMN + NADH + 2 H(+). In terms of biological role, catalyzes the reduction of FMN to FMNH2 which is used to reduce pyrimidine by RutA via the Rut pathway. This chain is FMN reductase (NADH) RutF 2, found in Methylorubrum extorquens (strain PA1) (Methylobacterium extorquens).